Consider the following 131-residue polypeptide: Small ribosomal subunit protein uS8 (131 aa).

It belongs to the universal ribosomal protein uS8 family. In terms of assembly, part of the 30S ribosomal subunit. Contacts proteins S5 and S12.

Functionally, one of the primary rRNA binding proteins, it binds directly to 16S rRNA central domain where it helps coordinate assembly of the platform of the 30S subunit. The protein is Small ribosomal subunit protein uS8 of Acinetobacter baumannii (strain AB307-0294).